A 70-amino-acid polypeptide reads, in one-letter code: Metallothionein-like protein 1 (70 aa).

It belongs to the metallothionein superfamily. Type 15 family.

Its function is as follows. Metallothioneins have a high content of cysteine residues that bind various heavy metals. This is Metallothionein-like protein 1 (MT1) from Festuca rubra (Red fescue).